A 141-amino-acid polypeptide reads, in one-letter code: Nucleoside diphosphate kinase (141 aa).

Residues K9, F57, R85, T91, R102, and N112 each coordinate ATP. H115 functions as the Pros-phosphohistidine intermediate in the catalytic mechanism.

The protein belongs to the NDK family. As to quaternary structure, homotetramer. Mg(2+) is required as a cofactor.

Its subcellular location is the cytoplasm. The enzyme catalyses a 2'-deoxyribonucleoside 5'-diphosphate + ATP = a 2'-deoxyribonucleoside 5'-triphosphate + ADP. It carries out the reaction a ribonucleoside 5'-diphosphate + ATP = a ribonucleoside 5'-triphosphate + ADP. Major role in the synthesis of nucleoside triphosphates other than ATP. The ATP gamma phosphate is transferred to the NDP beta phosphate via a ping-pong mechanism, using a phosphorylated active-site intermediate. This is Nucleoside diphosphate kinase from Chlamydia caviae (strain ATCC VR-813 / DSM 19441 / 03DC25 / GPIC) (Chlamydophila caviae).